A 432-amino-acid polypeptide reads, in one-letter code: MKFTLVATVLLTFSLSAFAVEYPVLTTASPDQVGFDSQKLHRLDGWIQNQIDAGYPSINLLVIKDNHIVLQKAWGYAKKYDGSTLLAHPIRATTNTMYDLASNTKMYATNFALQKLVYEGKIDVNDLVSKYIPGFKDMPGDKIKGKNKLRIIDILHHVAGFPADPQYPNKNVAGKLFSQSKSTTLEMIKKTPLEYQPGSKHIYSDVDYMILGFIIESITAIPLDRYVETTIYKPLGLKHTVFNPLMKGFTPPQIAATELHGNTRDGVIHFPNIRTNTLWGQVHDEKAWYSMGGVSGHAGLFSDTHDMAVLMQVMLNGGGYGNVKLFDDKTVAQFTRRSPEDATFGLGWRVNGNASMTPTFGVLASPQTYGHTGWTGTLTSIDPVNHMAIVILGNRPHSPVANPKVNPNVFVSGLLPAATYGWIVDQIYGSLK.

Residues 7 to 25 (ATVLLTFSLSAFAVEYPVL) traverse the membrane as a helical; Signal-anchor segment.

The protein belongs to the peptidase S12 family. YfeW subfamily.

It is found in the cell inner membrane. It catalyses the reaction Preferential cleavage: (Ac)2-L-Lys-D-Ala-|-D-Ala. Also transpeptidation of peptidyl-alanyl moieties that are N-acyl substituents of D-alanine.. The protein is Putative D-alanyl-D-alanine carboxypeptidase of Salmonella heidelberg (strain SL476).